Consider the following 139-residue polypeptide: Large ribosomal subunit protein uL16c (139 aa).

A disordered region spans residues 1 to 20 (MLSPKRTKYRKHHRGRMKGK).

Belongs to the universal ribosomal protein uL16 family. Part of the 50S ribosomal subunit.

Its subcellular location is the plastid. It is found in the chloroplast. In Pleurastrum terricola (Filamentous green alga), this protein is Large ribosomal subunit protein uL16c.